Reading from the N-terminus, the 224-residue chain is 7-cyano-7-deazaguanine synthase (224 aa).

10–20 is an ATP binding site; sequence LSGGLDSATVV. Positions 189, 199, 202, and 205 each coordinate Zn(2+).

The protein belongs to the QueC family. The cofactor is Zn(2+).

The catalysed reaction is 7-carboxy-7-deazaguanine + NH4(+) + ATP = 7-cyano-7-deazaguanine + ADP + phosphate + H2O + H(+). It participates in purine metabolism; 7-cyano-7-deazaguanine biosynthesis. Catalyzes the ATP-dependent conversion of 7-carboxy-7-deazaguanine (CDG) to 7-cyano-7-deazaguanine (preQ(0)). This chain is 7-cyano-7-deazaguanine synthase, found in Pseudomonas putida (strain ATCC 700007 / DSM 6899 / JCM 31910 / BCRC 17059 / LMG 24140 / F1).